The following is a 70-amino-acid chain: Putative defensin-like protein 280 (70 aa).

The first 23 residues, 1–23 (MASIKHFFLVFICVSVLLTSGLA), serve as a signal peptide directing secretion. 3 disulfide bridges follow: cysteine 30–cysteine 53, cysteine 39–cysteine 65, and cysteine 43–cysteine 67.

It belongs to the DEFL family.

It is found in the secreted. The chain is Putative defensin-like protein 280 from Arabidopsis thaliana (Mouse-ear cress).